The following is a 72-amino-acid chain: MKLSCGFLLILLVLSAMIATFSEVEAMKPSKPKCGLCRYRCCSGGCSSGKCVNGACDCSGRSDLNDELEKYQ.

The N-terminal stretch at 1 to 30 is a signal peptide; the sequence is MKLSCGFLLILLVLSAMIATFSEVEAMKPS. 4 disulfide bridges follow: cysteine 34-cysteine 42, cysteine 37-cysteine 58, cysteine 41-cysteine 51, and cysteine 46-cysteine 56. The propeptide occupies 60-72; it reads GRSDLNDELEKYQ.

The protein belongs to the short scorpion toxin superfamily. Potassium channel inhibitor family. Epsilon-KTx 01 subfamily. As to expression, expressed by the venom gland.

The protein resides in the secreted. In terms of biological role, potassium channel blocker. At 3 uM, this toxin blocks voltage-independently voltage-gated potassium channels rKv1.2/KCNA2 (25%), hKv1.3/KCNA3 (27%), rKv4.2/KCND2 (25%), Kv10.1/KCNH1/EAG1 (15%), Kv11/hERG (12%), and Shaker-IR (10%). On hKv1.3/KCNA3, the IC(50) is 17.1 +-3.3 uM. The polypeptide is Potassium channel toxin epsilon-KTx 1.1 (Tityus serrulatus (Brazilian scorpion)).